A 688-amino-acid chain; its full sequence is MSKIRVHEYAKKNNISSKDLMTKLKEMNIEVSNHMTMLEDEVVNKLDNEYNTGAEKPSVADEFEVEEKVVRSKKNSNKKKKKGKGNEDKRQDNFAGRQQTQIVETPDKITFSGSLTVGELAKKLSKEPSEIIKKLFMLGIMATINQDLDKDTIELIATDYGIEVEEEIVVSETEFETFMDEQDDEENLKERPAVVTIMGHVDHGKTTLLDSIRNSKVTAGEAGGITQHIGAYQVEVNDKKITFLDTPGHAAFTTMRARGAQVTDITILVVAADDGVMPQTVEAISHAKAAGVPIIVAVNKMDKPAANPDRVMQELTEYELVPEAWGGDTIFVPISAIQGEGIDNLLEMILLVSEVEEYKANPNRYATGTVIEAQLDKGKGTIATLLVQNGTLRVGDPIVVGTSFGRVRAMVSDIGRRVKVAGPSTPVEITGLNEVPQAGDRFMAFADEKKARQIGESRAQEALVAQRGEKSKLSLEDLFQQIQESDVKEINLIVKADVQGSVEAMAASLRKIDVEGVKVKIIHTGVGAITESDIILASASNAIVIGFNVRPDVNAKRTAELENVDVRLHRIIYKVIEEIELAMQGMLDPEFEEKVIGQAEVRQTFKVTKVGTIAGCYVIDGKITRDSGVRIIRDGIVIFEGQLDTLKRFKDDVKEVAQNYECGITIERYNDLKEGDIIEAYVMEEVKR.

The disordered stretch occupies residues 62–103; the sequence is EFEVEEKVVRSKKNSNKKKKKGKGNEDKRQDNFAGRQQTQIV. The span at 71–83 shows a compositional bias: basic residues; sequence RSKKNSNKKKKKG. In terms of domain architecture, tr-type G spans 190–359; it reads ERPAVVTIMG…LLVSEVEEYK (170 aa). Positions 199 to 206 are G1; the sequence is GHVDHGKT. 199–206 is a binding site for GTP; sequence GHVDHGKT. The tract at residues 224 to 228 is G2; it reads GITQH. A G3 region spans residues 245–248; it reads DTPG. GTP contacts are provided by residues 245–249 and 299–302; these read DTPGH and NKMD. The tract at residues 299 to 302 is G4; sequence NKMD. The segment at 335–337 is G5; sequence SAI.

Belongs to the TRAFAC class translation factor GTPase superfamily. Classic translation factor GTPase family. IF-2 subfamily.

It localises to the cytoplasm. Functionally, one of the essential components for the initiation of protein synthesis. Protects formylmethionyl-tRNA from spontaneous hydrolysis and promotes its binding to the 30S ribosomal subunits. Also involved in the hydrolysis of GTP during the formation of the 70S ribosomal complex. This Bacillus cereus (strain G9842) protein is Translation initiation factor IF-2.